The primary structure comprises 387 residues: Protein-glutamate methylesterase/protein-glutamine glutaminase 1 (387 aa).

Residues 18–136 (RVMVVDDSAV…EISGGTDFRH (119 aa)) form the Response regulatory domain. D69 carries the post-translational modification 4-aspartylphosphate. Residues 190–387 (PAAEERPDII…AYVLRSANKR (198 aa)) form the CheB-type methylesterase domain. Active-site residues include S204, H233, and D329.

Belongs to the CheB family. Phosphorylated by CheA. Phosphorylation of the N-terminal regulatory domain activates the methylesterase activity.

The protein resides in the cytoplasm. It carries out the reaction [protein]-L-glutamate 5-O-methyl ester + H2O = L-glutamyl-[protein] + methanol + H(+). The enzyme catalyses L-glutaminyl-[protein] + H2O = L-glutamyl-[protein] + NH4(+). In terms of biological role, involved in chemotaxis. Part of a chemotaxis signal transduction system that modulates chemotaxis in response to various stimuli. Catalyzes the demethylation of specific methylglutamate residues introduced into the chemoreceptors (methyl-accepting chemotaxis proteins or MCP) by CheR. Also mediates the irreversible deamidation of specific glutamine residues to glutamic acid. The sequence is that of Protein-glutamate methylesterase/protein-glutamine glutaminase 1 from Rhodospirillum rubrum (strain ATCC 11170 / ATH 1.1.1 / DSM 467 / LMG 4362 / NCIMB 8255 / S1).